A 395-amino-acid chain; its full sequence is MLAEQENQENVPPAAKAPPPAAGTRVALGLLRGGPARPGPAAQAARNGEGRGAAAGQQQQPFSVYVDEPDEERRRPQRKKERDEEAADAPGLRAALGTVGERRPLAPLGNAMELSLDSPSIMDISITSEAEERPNVNNVPDYVSDIHTYLREMEVKCKPKIGYMKKQPDITNNMRAILVDWLVEVGEEYKLQNETLHLAVNYIDRFLSSMSVLRGKLQLVGTAAMLLASKFEEIYPPEVAEFVYITDDTYNKKQVLRMEHLILKVLSFDLAAPTINQFLTQYFLHQQTNAKVESLSMYLGELTLIDADPYLKYLPSVIAAAAFHLASYTITGQTWPESLCKVTGYTLEHIKPCLMDLHRTYLKAAQHTQQSIREKYKSTKYHAVSLIDAPETLDL.

The segment at Met-1–Arg-93 is disordered. Positions Ala-27–Gln-60 are enriched in low complexity.

This sequence belongs to the cyclin family. Cyclin AB subfamily. Interacts with the CDK1 and CDK2 protein kinases to form serine/threonine kinase holoenzyme complexes.

It localises to the nucleus. The protein resides in the cytoplasm. In terms of biological role, cyclin which controls both the G1/S and the G2/M transition phases of the cell cycle. Functions through the formation of specific serine/threonine kinase holoenzyme complexes with the cyclin-dependent protein kinases CDK1 and CDK2. The cyclin subunit confers the substrate specificity of these complexes and differentially interacts with and activates CDK1 and CDK2 throughout the cell cycle. The sequence is that of Cyclin-A2 from Gallus gallus (Chicken).